Here is a 111-residue protein sequence, read N- to C-terminus: Universal stress protein B (111 aa).

2 helical membrane-spanning segments follow: residues 1–21 (MISTVALFWGLCVVCIINMAR) and 90–110 (FILTSALCGLVVISLIALLIW).

It belongs to the universal stress protein B family.

The protein resides in the cell inner membrane. This chain is Universal stress protein B, found in Escherichia fergusonii (strain ATCC 35469 / DSM 13698 / CCUG 18766 / IAM 14443 / JCM 21226 / LMG 7866 / NBRC 102419 / NCTC 12128 / CDC 0568-73).